Reading from the N-terminus, the 1035-residue chain is GRB10-interacting GYF protein 1 (1035 aa).

A phosphoserine mark is found at Ser-24, Ser-28, Ser-137, and Ser-157. The interval Lys-105 to Asp-422 is disordered. 2 stretches are compositionally biased toward basic and acidic residues: residues Ser-148–Phe-179 and Pro-186–Glu-203. Phosphoserine is present on Ser-230. Basic and acidic residues predominate over residues Gly-239–Arg-267. Composition is skewed to acidic residues over residues Cys-295–Gly-304 and Pro-324–Pro-349. Ser-341 is subject to Phosphoserine. Residues Ser-367–Leu-378 show a composition bias toward low complexity. The segment covering Thr-388–Arg-401 has biased composition (basic and acidic residues). A Phosphoserine modification is found at Ser-406. A compositionally biased stretch (low complexity) spans Ser-406–Gly-417. In terms of domain architecture, GYF spans Ala-474–Gly-522. Residues Ser-538 and Ser-638 each carry the phosphoserine modification. 3 disordered regions span residues Pro-621–Pro-640, Lys-696–Glu-724, and Trp-825–Arg-879. Residues Leu-629 to Val-639 show a composition bias toward polar residues. Residues Lys-696–Glu-722 show a composition bias toward basic and acidic residues. The span at Leu-857–Ser-874 shows a compositional bias: low complexity. Residue Ser-862 is modified to Phosphoserine.

Belongs to the GIGYF family. Interacts with GRB10. This transient binding is increased under IGF1 stimulation and leads to recruitment of GIGYF1/GRB10 complex to IGF1 receptor. Interacts with DDX6.

In terms of biological role, may act cooperatively with GRB10 to regulate tyrosine kinase receptor signaling. May increase IGF1 receptor phosphorylation under IGF1 stimulation as well as phosphorylation of IRS1 and SHC1. This chain is GRB10-interacting GYF protein 1 (GIGYF1), found in Homo sapiens (Human).